Consider the following 197-residue polypeptide: MQKIVLATGNPGKVRELANLLADFGLDVVAQTELGVESAEETGLTFIENAILKARHAAQTTGLPAIADDSGLAVDALGGAPGIYSARYAGTDASDQENLEKLLAALQNVPEEKRGAQFHCVLVYMRHAEDPTPLVFHGQWPGVIAHQPAGAAGFGYDPIFYVPALGKTAAELTREEKHAVSHRGQALKLMLDALRDA.

Position 8 to 13 (8 to 13 (TGNPGK)) interacts with substrate. Glu40 and Asp69 together coordinate Mg(2+). The Proton acceptor role is filled by Asp69. Substrate is bound by residues Ser70, 154–157 (FGYD), Lys177, and 182–183 (HR).

This sequence belongs to the HAM1 NTPase family. Homodimer. Mg(2+) serves as cofactor.

The enzyme catalyses XTP + H2O = XMP + diphosphate + H(+). It carries out the reaction dITP + H2O = dIMP + diphosphate + H(+). The catalysed reaction is ITP + H2O = IMP + diphosphate + H(+). Functionally, pyrophosphatase that catalyzes the hydrolysis of nucleoside triphosphates to their monophosphate derivatives, with a high preference for the non-canonical purine nucleotides XTP (xanthosine triphosphate), dITP (deoxyinosine triphosphate) and ITP. Seems to function as a house-cleaning enzyme that removes non-canonical purine nucleotides from the nucleotide pool, thus preventing their incorporation into DNA/RNA and avoiding chromosomal lesions. This chain is dITP/XTP pyrophosphatase, found in Yersinia pseudotuberculosis serotype I (strain IP32953).